The following is a 469-amino-acid chain: UDP-N-acetylmuramate--L-alanine ligase (469 aa).

An ATP-binding site is contributed by 119–125; that stretch reads GTHGKTT.

Belongs to the MurCDEF family.

It is found in the cytoplasm. The enzyme catalyses UDP-N-acetyl-alpha-D-muramate + L-alanine + ATP = UDP-N-acetyl-alpha-D-muramoyl-L-alanine + ADP + phosphate + H(+). It participates in cell wall biogenesis; peptidoglycan biosynthesis. Functionally, cell wall formation. The polypeptide is UDP-N-acetylmuramate--L-alanine ligase (Vesicomyosocius okutanii subsp. Calyptogena okutanii (strain HA)).